A 92-amino-acid polypeptide reads, in one-letter code: PqqA binding protein (92 aa).

Belongs to the PqqD family. Monomer. Interacts with PqqE.

It functions in the pathway cofactor biosynthesis; pyrroloquinoline quinone biosynthesis. In terms of biological role, functions as a PqqA binding protein and presents PqqA to PqqE, in the pyrroloquinoline quinone (PQQ) biosynthetic pathway. The polypeptide is PqqA binding protein (Xanthomonas campestris pv. campestris (strain B100)).